A 148-amino-acid polypeptide reads, in one-letter code: MLKVKIVRLNKQAFLPVYATAHAAGMDVSACLEEPVVVEPFSTALIPAGFAIELPIGYEMQLRPRSGLALRSMITLANSPATIDADYRGEVKVILINHGPQPFTVNNGDRIAQMVVARVEEVSFEEVSELGETVRGDGGFGHTGTVRS.

Substrate is bound by residues 65–67 (RSG), Asn-78, 82–84 (TID), and Lys-92.

Belongs to the dUTPase family. It depends on Mg(2+) as a cofactor.

It carries out the reaction dUTP + H2O = dUMP + diphosphate + H(+). It functions in the pathway pyrimidine metabolism; dUMP biosynthesis; dUMP from dCTP (dUTP route): step 2/2. In terms of biological role, this enzyme is involved in nucleotide metabolism: it produces dUMP, the immediate precursor of thymidine nucleotides and it decreases the intracellular concentration of dUTP so that uracil cannot be incorporated into DNA. The polypeptide is Deoxyuridine 5'-triphosphate nucleotidohydrolase (Chlorobium phaeovibrioides (strain DSM 265 / 1930) (Prosthecochloris vibrioformis (strain DSM 265))).